We begin with the raw amino-acid sequence, 237 residues long: MPNAYKRVLLKLSGEALMGDDAFGINRATIERMVADIAEVVRLGTQLAVVIGGGNIFRGVAGGAAGMDRATADYMGMLATMMNALALQDAMRHAGIEARVQSALRMDQVVEPYIRPRAIRQLEEGKVVIFAAGTGNPFFTTDTAAALRGSEVGAEVVLKATKVDGVYSADPKKDPSATRYSSISFDEAIGRNLQVMDATAFALCRDQKLPIRVFSINKPGALKRIVQGEDEGTLVHV.

11 to 14 (KLSG) serves as a coordination point for ATP. Glycine 53 lines the UMP pocket. The ATP site is built by glycine 54 and arginine 58. UMP-binding positions include aspartate 73 and 134-141 (TGNPFFTT). 3 residues coordinate ATP: threonine 161, tyrosine 167, and aspartate 170.

The protein belongs to the UMP kinase family. In terms of assembly, homohexamer.

Its subcellular location is the cytoplasm. The catalysed reaction is UMP + ATP = UDP + ADP. The protein operates within pyrimidine metabolism; CTP biosynthesis via de novo pathway; UDP from UMP (UMPK route): step 1/1. Inhibited by UTP. Functionally, catalyzes the reversible phosphorylation of UMP to UDP. In Burkholderia mallei (strain NCTC 10247), this protein is Uridylate kinase.